We begin with the raw amino-acid sequence, 724 residues long: Ribosomal RNA large subunit methyltransferase K/L (724 aa).

A THUMP domain is found at 42–153; that stretch reads DAQRLVLWSR…KGRATLSVDL (112 aa).

It belongs to the methyltransferase superfamily. RlmKL family.

The protein resides in the cytoplasm. The enzyme catalyses guanosine(2445) in 23S rRNA + S-adenosyl-L-methionine = N(2)-methylguanosine(2445) in 23S rRNA + S-adenosyl-L-homocysteine + H(+). The catalysed reaction is guanosine(2069) in 23S rRNA + S-adenosyl-L-methionine = N(2)-methylguanosine(2069) in 23S rRNA + S-adenosyl-L-homocysteine + H(+). Specifically methylates the guanine in position 2445 (m2G2445) and the guanine in position 2069 (m7G2069) of 23S rRNA. This Xylella fastidiosa (strain 9a5c) protein is Ribosomal RNA large subunit methyltransferase K/L.